Here is a 265-residue protein sequence, read N- to C-terminus: 4-hydroxy-tetrahydrodipicolinate reductase (265 aa).

Residue 9-14 (GPRGRM) coordinates NAD(+). Residue arginine 37 coordinates NADP(+). NAD(+)-binding positions include 98 to 100 (GTT) and 124 to 127 (APNF). The active-site Proton donor/acceptor is histidine 154. Histidine 155 contributes to the (S)-2,3,4,5-tetrahydrodipicolinate binding site. Lysine 158 functions as the Proton donor in the catalytic mechanism. 164 to 165 (GT) serves as a coordination point for (S)-2,3,4,5-tetrahydrodipicolinate.

The protein belongs to the DapB family.

It localises to the cytoplasm. The catalysed reaction is (S)-2,3,4,5-tetrahydrodipicolinate + NAD(+) + H2O = (2S,4S)-4-hydroxy-2,3,4,5-tetrahydrodipicolinate + NADH + H(+). The enzyme catalyses (S)-2,3,4,5-tetrahydrodipicolinate + NADP(+) + H2O = (2S,4S)-4-hydroxy-2,3,4,5-tetrahydrodipicolinate + NADPH + H(+). The protein operates within amino-acid biosynthesis; L-lysine biosynthesis via DAP pathway; (S)-tetrahydrodipicolinate from L-aspartate: step 4/4. In terms of biological role, catalyzes the conversion of 4-hydroxy-tetrahydrodipicolinate (HTPA) to tetrahydrodipicolinate. The chain is 4-hydroxy-tetrahydrodipicolinate reductase from Geobacillus kaustophilus (strain HTA426).